A 184-amino-acid chain; its full sequence is Mediator of RNA polymerase II transcription subunit 30 (184 aa).

Positions 136 to 179 (SQLRFASEEKREILEVNKKLKQKNQQLKQIMDQLRNLIWDINSM) form a coiled coil.

It belongs to the Mediator complex subunit 30 family. As to quaternary structure, component of the Mediator complex.

Its subcellular location is the nucleus. In terms of biological role, component of the Mediator complex, a coactivator involved in the regulated transcription of nearly all RNA polymerase II-dependent genes. Mediator functions as a bridge to convey information from gene-specific regulatory proteins to the basal RNA polymerase II transcription machinery. Mediator is recruited to promoters by direct interactions with regulatory proteins and serves as a scaffold for the assembly of a functional preinitiation complex with RNA polymerase II and the general transcription factors. The protein is Mediator of RNA polymerase II transcription subunit 30 (med30) of Xenopus laevis (African clawed frog).